A 735-amino-acid chain; its full sequence is Transmembrane channel-like protein 7 (735 aa).

Topologically, residues 1-164 are extracellular; sequence MSEFGAGAEL…QSYFSFLRFL (164 aa). The helical transmembrane segment at 165 to 185 threads the bilayer; that stretch reads VLLNFLMFILMFSFVTLPAVI. Residues 186 to 233 are Cytoplasmic-facing; that stretch reads SNYGIFNSSSTKISPNNTEPYCTVYTPSGNKGLVYFYTYLKDLLTGTG. The chain crosses the membrane as a helical span at residues 234–254; sequence FLEVTVLFYGYYTIDAAWFSV. Over 255–258 the chain is Extracellular; sequence LRYN. The helical transmembrane segment at 259–279 threads the bilayer; it reads LPLAYLLTTFAYLALSFVWII. The Cytoplasmic segment spans residues 280 to 355; sequence KRSVERFRQH…TMKEKLQIYS (76 aa). Residues 356–376 form a helical membrane-spanning segment; that stretch reads LRIFINIIVIAVLSGCFYSIY. Residues 377 to 403 are Extracellular-facing; the sequence is RATVFSQENSSVSIRRNVMIANLLVQY. N385 carries N-linked (GlcNAc...) asparagine glycosylation. Residues 404 to 424 form a helical membrane-spanning segment; that stretch reads LPSIVITSANFIAPQIFSFLI. The Cytoplasmic segment spans residues 425-436; sequence RFEDYSAAFEIR. The chain crosses the membrane as a helical span at residues 437-457; the sequence is LTLIRCVFVRLANVGVLLFSL. At 458–488 the chain is on the extracellular side; that stretch reads WSQIHCDNDQCKACGYDYELYPCWESAVGQE. Residues 489 to 509 form a helical membrane-spanning segment; the sequence is MYKLLIFDFMIIIAMTLFVDF. The Cytoplasmic segment spans residues 510–548; that stretch reads PRKLLVTYCSWKLVQWWGLQEFGISDNVLEIIYGQTICW. Residues 549–569 form a helical membrane-spanning segment; that stretch reads IGTFFSPLLPAIATIKYFIIF. The Extracellular portion of the chain corresponds to 570–594; it reads YIKKISLIHTRKPASRPIRASSSNF. A helical transmembrane segment spans residues 595 to 615; the sequence is FFLAVLLIGLILAFVPLGVSI. The Cytoplasmic portion of the chain corresponds to 616 to 634; that stretch reads ALISSSKACGPFRNFNTSW. A helical transmembrane segment spans residues 635–655; that stretch reads AIVPYTILEFPIGLQKFLYGI. The Extracellular segment spans residues 656-658; sequence ASE. A helical transmembrane segment spans residues 659–679; the sequence is AFAVPFFVIACLFMFYFIALA. At 680–735 the chain is on the cytoplasmic side; that stretch reads GAHKRVVEQLREQLVTESRDKLFLLEKLSEAQKNSGKPQKARKLTSSWLLEPLDKG. Residues 710–735 form a disordered region; that stretch reads AQKNSGKPQKARKLTSSWLLEPLDKG.

The protein belongs to the TMC family.

It is found in the membrane. Its function is as follows. Probable component of an ion channel. This Gallus gallus (Chicken) protein is Transmembrane channel-like protein 7 (Tmc7).